The following is a 432-amino-acid chain: Tol-Pal system protein TolB (432 aa).

Residues 1-22 (MMFKKCLSVLFTCLIFISSARA) form the signal peptide.

The protein belongs to the TolB family. In terms of assembly, the Tol-Pal system is composed of five core proteins: the inner membrane proteins TolA, TolQ and TolR, the periplasmic protein TolB and the outer membrane protein Pal. They form a network linking the inner and outer membranes and the peptidoglycan layer.

The protein resides in the periplasm. Part of the Tol-Pal system, which plays a role in outer membrane invagination during cell division and is important for maintaining outer membrane integrity. In Marinomonas sp. (strain MWYL1), this protein is Tol-Pal system protein TolB.